A 245-amino-acid polypeptide reads, in one-letter code: tRNA pseudouridine synthase A (245 aa).

Aspartate 52 serves as the catalytic Nucleophile. Tyrosine 111 lines the substrate pocket.

Belongs to the tRNA pseudouridine synthase TruA family. Homodimer.

The enzyme catalyses uridine(38/39/40) in tRNA = pseudouridine(38/39/40) in tRNA. In terms of biological role, formation of pseudouridine at positions 38, 39 and 40 in the anticodon stem and loop of transfer RNAs. In Wolbachia pipientis wMel, this protein is tRNA pseudouridine synthase A.